We begin with the raw amino-acid sequence, 450 residues long: Tubulin alpha chain (450 aa).

Gln-11 is a GTP binding site. Residue Lys-40 is modified to N6-acetyllysine. Glu-71, Ser-140, Gly-144, Thr-145, Thr-179, Asn-206, and Asn-228 together coordinate GTP. Glu-71 serves as a coordination point for Mg(2+). The active site involves Glu-254.

Belongs to the tubulin family. Dimer of alpha and beta chains. A typical microtubule is a hollow water-filled tube with an outer diameter of 25 nm and an inner diameter of 15 nM. Alpha-beta heterodimers associate head-to-tail to form protofilaments running lengthwise along the microtubule wall with the beta-tubulin subunit facing the microtubule plus end conferring a structural polarity. Microtubules usually have 13 protofilaments but different protofilament numbers can be found in some organisms and specialized cells. It depends on Mg(2+) as a cofactor. Post-translationally, acetylation of alpha chains at Lys-40 stabilizes microtubules and affects affinity and processivity of microtubule motors. This modification has a role in multiple cellular functions, ranging from cell motility, cell cycle progression or cell differentiation to intracellular trafficking and signaling.

Its subcellular location is the cytoplasm. It is found in the cytoskeleton. It carries out the reaction GTP + H2O = GDP + phosphate + H(+). Its function is as follows. Tubulin is the major constituent of microtubules, a cylinder consisting of laterally associated linear protofilaments composed of alpha- and beta-tubulin heterodimers. Microtubules grow by the addition of GTP-tubulin dimers to the microtubule end, where a stabilizing cap forms. Below the cap, tubulin dimers are in GDP-bound state, owing to GTPase activity of alpha-tubulin. This is Tubulin alpha chain from Euplotoides octocarinatus (Freshwater ciliate).